Here is a 276-residue protein sequence, read N- to C-terminus: uncharacterized protein (276 aa).

The interval 1-20 (MMSDEQHQGGDGQTTTNTNT) is disordered.

This is an uncharacterized protein from Dictyostelium discoideum (Social amoeba).